The primary structure comprises 690 residues: Dual specificity protein kinase lkh1 (690 aa).

Positions 39–70 (PNLPPPFSVHQLQSFVPPQPPSSSSPSTTGTV) are disordered. The 321-residue stretch at 362 to 682 (YTVVRLLGHG…AKEALWHPFF (321 aa)) folds into the Protein kinase domain. Residues 368 to 376 (LGHGTFGKV) and Lys391 each bind ATP. The Proton acceptor role is filled by Asp488.

This sequence belongs to the protein kinase superfamily. CMGC Ser/Thr protein kinase family. Lammer subfamily. Autophosphorylates on all three types of residues.

It catalyses the reaction L-seryl-[protein] + ATP = O-phospho-L-seryl-[protein] + ADP + H(+). It carries out the reaction L-threonyl-[protein] + ATP = O-phospho-L-threonyl-[protein] + ADP + H(+). The enzyme catalyses L-tyrosyl-[protein] + ATP = O-phospho-L-tyrosyl-[protein] + ADP + H(+). Protein kinase that may act as a negative regulator of filamentous growth and flocculation. Appears to have a role in normal cell wall and septum formation and in cell separation. May have antagonistic function in the regulation of beta-glucan distribution between the sites for cell wall and septum assembly. This is Dual specificity protein kinase lkh1 (lkh1) from Schizosaccharomyces pombe (strain 972 / ATCC 24843) (Fission yeast).